Consider the following 21-residue polypeptide: 71 kDa F-actin-binding protein (21 aa).

The protein to yeast fimbrin. In terms of processing, the N-terminus is blocked.

Functionally, binds directly to F-actin and induces actin filament bundling. May function as a regulator of actin filament organization. The sequence is that of 71 kDa F-actin-binding protein from Tetrahymena pyriformis.